The sequence spans 286 residues: Ribonuclease H1 (286 aa).

Over residues 101-115 (EPLDGDGHESAEPYA) the composition is skewed to basic and acidic residues. Residues 101-127 (EPLDGDGHESAEPYAKHMKPSVEPAPP) are disordered. The RNase H type-1 domain occupies 136–282 (MGDFVVVYTD…ADRLAREGAK (147 aa)). Residues Asp145, Glu186, Asp210, and Asp274 each contribute to the Mg(2+) site.

It belongs to the RNase H family. In terms of assembly, monomer. Mg(2+) is required as a cofactor. In terms of tissue distribution, ubiquitous.

Its subcellular location is the cytoplasm. The catalysed reaction is Endonucleolytic cleavage to 5'-phosphomonoester.. Its activity is regulated as follows. In the presence of magnesium, manganese is inhibitory. In terms of biological role, endonuclease that specifically degrades the RNA of RNA-DNA hybrids. Plays a role in RNA polymerase II (RNAp II) transcription termination by degrading R-loop RNA-DNA hybrid formation at G-rich pause sites located downstream of the poly(A) site and behind the elongating RNAp II. The sequence is that of Ribonuclease H1 (RNASEH1) from Homo sapiens (Human).